Here is an 89-residue protein sequence, read N- to C-terminus: Small ribosomal subunit protein uS14 (89 aa).

The protein belongs to the universal ribosomal protein uS14 family. Part of the 30S ribosomal subunit. Contacts proteins S3 and S10.

Functionally, binds 16S rRNA, required for the assembly of 30S particles and may also be responsible for determining the conformation of the 16S rRNA at the A site. In Aster yellows witches'-broom phytoplasma (strain AYWB), this protein is Small ribosomal subunit protein uS14.